The chain runs to 435 residues: Trigger factor (435 aa).

One can recognise a PPIase FKBP-type domain in the interval 161–246 (GDKLTLDFTG…IHKTEGPILP (86 aa)).

The protein belongs to the FKBP-type PPIase family. Tig subfamily.

It localises to the cytoplasm. It carries out the reaction [protein]-peptidylproline (omega=180) = [protein]-peptidylproline (omega=0). Involved in protein export. Acts as a chaperone by maintaining the newly synthesized protein in an open conformation. Functions as a peptidyl-prolyl cis-trans isomerase. The sequence is that of Trigger factor from Colwellia psychrerythraea (strain 34H / ATCC BAA-681) (Vibrio psychroerythus).